A 303-amino-acid polypeptide reads, in one-letter code: Glycine--tRNA ligase alpha subunit (303 aa).

It belongs to the class-II aminoacyl-tRNA synthetase family. As to quaternary structure, tetramer of two alpha and two beta subunits.

It is found in the cytoplasm. The enzyme catalyses tRNA(Gly) + glycine + ATP = glycyl-tRNA(Gly) + AMP + diphosphate. The chain is Glycine--tRNA ligase alpha subunit from Cronobacter sakazakii (strain ATCC BAA-894) (Enterobacter sakazakii).